A 186-amino-acid polypeptide reads, in one-letter code: T-cell receptor-associated transmembrane adapter 1 (186 aa).

At 1–7 the chain is on the extracellular side; the sequence is MSGISGC. The helical; Signal-anchor for type III membrane protein transmembrane segment at 8–28 threads the bilayer; sequence PFFLWGLLALLGLALVISLIF. The Cytoplasmic segment spans residues 29 to 186; the sequence is NISHYVEKQR…LIRAKREPIN (158 aa). At serine 46 the chain carries Phosphoserine. Tyrosine 79 bears the Phosphotyrosine mark. Residues 79-82 are interaction with PIK3R1; it reads YEQM. Residues 116-140 are disordered; it reads SVKGKRRKPRKQNTHFSDKDGDEQL. A compositionally biased stretch (basic residues) spans 118 to 128; the sequence is KGKRRKPRKQN. A compositionally biased stretch (basic and acidic residues) spans 131–140; the sequence is FSDKDGDEQL.

In terms of assembly, homodimer; disulfide-linked. Interacts with CD3Z. When phosphorylated, interacts with PIK3R1. Phosphorylated on tyrosines by LCK or FYN upon TCR activation. Strongly expressed in thymus, and to a lesser extent in spleen, lymph node and peripheral blood lymphocytes. Present in T-cells and NK cells, but not B-cells (at protein level).

The protein resides in the cell membrane. Stabilizes the TCR (T-cell antigen receptor)/CD3 complex at the surface of T-cells. This is T-cell receptor-associated transmembrane adapter 1 (TRAT1) from Homo sapiens (Human).